The primary structure comprises 231 residues: Large ribosomal subunit protein uL1 (231 aa).

It belongs to the universal ribosomal protein uL1 family. Part of the 50S ribosomal subunit.

In terms of biological role, binds directly to 23S rRNA. The L1 stalk is quite mobile in the ribosome, and is involved in E site tRNA release. Its function is as follows. Protein L1 is also a translational repressor protein, it controls the translation of the L11 operon by binding to its mRNA. This Desulforudis audaxviator (strain MP104C) protein is Large ribosomal subunit protein uL1.